The chain runs to 523 residues: NAD(P)H-quinone oxidoreductase subunit 2 (523 aa).

A run of 13 helical transmembrane segments spans residues 30 to 50 (VGPE…DLAG), 57 to 77 (WVPP…ALQW), 94 to 114 (LAIA…LISW), 128 to 148 (AAIL…TDLV), 182 to 202 (LLVG…LYGL), 223 to 243 (AALA…AVPF), 255 to 275 (PTPV…ALAL), 291 to 311 (LLFT…ALAQ), 317 to 337 (MLAY…VCGT), 345 to 365 (VLYM…IILF), 389 to 409 (LGLS…GFFG), 424 to 444 (VLVV…IGVI), and 477 to 497 (VALV…NPLF).

This sequence belongs to the complex I subunit 2 family. NDH-1 can be composed of about 15 different subunits; different subcomplexes with different compositions have been identified which probably have different functions.

It localises to the cellular thylakoid membrane. The enzyme catalyses a plastoquinone + NADH + (n+1) H(+)(in) = a plastoquinol + NAD(+) + n H(+)(out). The catalysed reaction is a plastoquinone + NADPH + (n+1) H(+)(in) = a plastoquinol + NADP(+) + n H(+)(out). NDH-1 shuttles electrons from an unknown electron donor, via FMN and iron-sulfur (Fe-S) centers, to quinones in the respiratory and/or the photosynthetic chain. The immediate electron acceptor for the enzyme in this species is believed to be plastoquinone. Couples the redox reaction to proton translocation, and thus conserves the redox energy in a proton gradient. Cyanobacterial NDH-1 also plays a role in inorganic carbon-concentration. This is NAD(P)H-quinone oxidoreductase subunit 2 from Synechococcus sp. (strain CC9311).